A 263-amino-acid polypeptide reads, in one-letter code: 4-hydroxy-2-oxo-heptane-1,7-dioate aldolase (263 aa).

The active-site Proton acceptor is the His45. Substrate is bound at residue Gln147. A divalent metal cation is bound at residue Glu149. Positions 174 and 175 each coordinate substrate. Asp175 contributes to the a divalent metal cation binding site.

The protein belongs to the HpcH/HpaI aldolase family. In terms of assembly, homohexamer; trimer of dimers. The cofactor is a divalent metal cation.

The catalysed reaction is 4-hydroxy-2-oxoheptanedioate = succinate semialdehyde + pyruvate. Its pathway is aromatic compound metabolism; 4-hydroxyphenylacetate degradation; pyruvate and succinate semialdehyde from 4-hydroxyphenylacetate: step 7/7. Its function is as follows. Catalyzes the reversible retro-aldol cleavage of 4-hydroxy-2-ketoheptane-1,7-dioate (HKHD) to pyruvate and succinic semialdehyde. The chain is 4-hydroxy-2-oxo-heptane-1,7-dioate aldolase from Salmonella newport (strain SL254).